Consider the following 204-residue polypeptide: Protein GrpE (204 aa).

Residues 1-52 (MSSKNNPESETKAKNKWEKVMEAEEEQEEGGGDGSQEMEPHREGLEFPSREK) are disordered. Basic and acidic residues-rich tracts occupy residues 7–22 (PESE…KVME) and 38–52 (MEPH…SREK).

This sequence belongs to the GrpE family. Homodimer.

It is found in the cytoplasm. In terms of biological role, participates actively in the response to hyperosmotic and heat shock by preventing the aggregation of stress-denatured proteins, in association with DnaK and GrpE. It is the nucleotide exchange factor for DnaK and may function as a thermosensor. Unfolded proteins bind initially to DnaJ; upon interaction with the DnaJ-bound protein, DnaK hydrolyzes its bound ATP, resulting in the formation of a stable complex. GrpE releases ADP from DnaK; ATP binding to DnaK triggers the release of the substrate protein, thus completing the reaction cycle. Several rounds of ATP-dependent interactions between DnaJ, DnaK and GrpE are required for fully efficient folding. This chain is Protein GrpE, found in Coxiella burnetii (strain Dugway 5J108-111).